The chain runs to 82 residues: ATP synthase subunit c (82 aa).

The next 2 helical transmembrane spans lie at 7–27 (AASVLAAALAVGLAAIGPGIG) and 57–77 (LAFMEALTIYGLVVALVLLFA).

Belongs to the ATPase C chain family. F-type ATPases have 2 components, F(1) - the catalytic core - and F(0) - the membrane proton channel. F(1) has five subunits: alpha(3), beta(3), gamma(1), delta(1), epsilon(1). F(0) has four main subunits: a(1), b(1), b'(1) and c(10-14). The alpha and beta chains form an alternating ring which encloses part of the gamma chain. F(1) is attached to F(0) by a central stalk formed by the gamma and epsilon chains, while a peripheral stalk is formed by the delta, b and b' chains.

It is found in the cellular thylakoid membrane. In terms of biological role, f(1)F(0) ATP synthase produces ATP from ADP in the presence of a proton or sodium gradient. F-type ATPases consist of two structural domains, F(1) containing the extramembraneous catalytic core and F(0) containing the membrane proton channel, linked together by a central stalk and a peripheral stalk. During catalysis, ATP synthesis in the catalytic domain of F(1) is coupled via a rotary mechanism of the central stalk subunits to proton translocation. Key component of the F(0) channel; it plays a direct role in translocation across the membrane. A homomeric c-ring of between 10-14 subunits forms the central stalk rotor element with the F(1) delta and epsilon subunits. In Synechococcus sp. (strain WH7803), this protein is ATP synthase subunit c.